Here is a 95-residue protein sequence, read N- to C-terminus: MRRAEVKRSAHGPADEKAQTGSPRKERCAPWSVGTADGEGDERVPSDPEKGRPQDSAPTGRKQRTSRAGSSWQHSLAAMETMYICGIGQQSYQSR.

Composition is skewed to basic and acidic residues over residues 1–28 (MRRA…KERC) and 41–53 (DERV…KGRP). The interval 1 to 73 (MRRAEVKRSA…RTSRAGSSWQ (73 aa)) is disordered.

This is an uncharacterized protein from Homo sapiens (Human).